The chain runs to 133 residues: Large ribosomal subunit protein uL15 (133 aa).

Residues 1–64 (MGLENLKPAK…QPLQRRLPKI (64 aa)) are disordered.

It belongs to the universal ribosomal protein uL15 family. In terms of assembly, part of the 50S ribosomal subunit.

In terms of biological role, binds to the 23S rRNA. This is Large ribosomal subunit protein uL15 from Helicobacter pylori (strain J99 / ATCC 700824) (Campylobacter pylori J99).